The following is a 486-amino-acid chain: Cardiolipin synthase A (486 aa).

The next 2 helical transmembrane spans lie at 3 to 23 (TVYT…IAGV) and 38 to 58 (MAWL…YLAV). 2 consecutive PLD phosphodiesterase domains span residues 219-246 (MDLR…VDPR) and 399-426 (EGGL…DMRS). Residues His-224, Lys-226, Asp-231, His-404, Lys-406, and Asp-411 contribute to the active site.

Belongs to the phospholipase D family. Cardiolipin synthase subfamily. ClsA sub-subfamily.

It is found in the cell inner membrane. It catalyses the reaction 2 a 1,2-diacyl-sn-glycero-3-phospho-(1'-sn-glycerol) = a cardiolipin + glycerol. Its function is as follows. Catalyzes the reversible phosphatidyl group transfer from one phosphatidylglycerol molecule to another to form cardiolipin (CL) (diphosphatidylglycerol) and glycerol. The protein is Cardiolipin synthase A of Escherichia coli O157:H7 (strain EC4115 / EHEC).